The following is a 267-amino-acid chain: Outer membrane protein assembly factor BamD (267 aa).

Residues 1–16 form the signal peptide; it reads MKKILLTVSLGLALSA. The N-palmitoyl cysteine moiety is linked to residue cysteine 17. Cysteine 17 carries the S-diacylglycerol cysteine lipid modification.

This sequence belongs to the BamD family. Part of the Bam complex.

It is found in the cell outer membrane. In terms of biological role, part of the outer membrane protein assembly complex, which is involved in assembly and insertion of beta-barrel proteins into the outer membrane. Required for efficient transformation of Neisseria meningitidis by species-related DNA. This chain is Outer membrane protein assembly factor BamD, found in Neisseria meningitidis serogroup B (strain ATCC BAA-335 / MC58).